A 472-amino-acid polypeptide reads, in one-letter code: Methylenetetrahydrofolate--tRNA-(uracil-5-)-methyltransferase TrmFO (472 aa).

10-15 (GGGLAG) is an FAD binding site.

It belongs to the MnmG family. TrmFO subfamily. Requires FAD as cofactor.

It is found in the cytoplasm. The catalysed reaction is uridine(54) in tRNA + (6R)-5,10-methylene-5,6,7,8-tetrahydrofolate + NADH + H(+) = 5-methyluridine(54) in tRNA + (6S)-5,6,7,8-tetrahydrofolate + NAD(+). It catalyses the reaction uridine(54) in tRNA + (6R)-5,10-methylene-5,6,7,8-tetrahydrofolate + NADPH + H(+) = 5-methyluridine(54) in tRNA + (6S)-5,6,7,8-tetrahydrofolate + NADP(+). Catalyzes the folate-dependent formation of 5-methyl-uridine at position 54 (M-5-U54) in all tRNAs. The chain is Methylenetetrahydrofolate--tRNA-(uracil-5-)-methyltransferase TrmFO from Mesorhizobium japonicum (strain LMG 29417 / CECT 9101 / MAFF 303099) (Mesorhizobium loti (strain MAFF 303099)).